Consider the following 219-residue polypeptide: tRNA (guanine-N(7)-)-methyltransferase (219 aa).

S-adenosyl-L-methionine-binding residues include Glu43, Asp68, Glu101, and Asn124. The substrate site is built by Lys128 and Asp160.

The protein belongs to the class I-like SAM-binding methyltransferase superfamily. TrmB family.

The enzyme catalyses guanosine(46) in tRNA + S-adenosyl-L-methionine = N(7)-methylguanosine(46) in tRNA + S-adenosyl-L-homocysteine. The protein operates within tRNA modification; N(7)-methylguanine-tRNA biosynthesis. In terms of biological role, catalyzes the formation of N(7)-methylguanine at position 46 (m7G46) in tRNA. The sequence is that of tRNA (guanine-N(7)-)-methyltransferase from Clostridium beijerinckii (strain ATCC 51743 / NCIMB 8052) (Clostridium acetobutylicum).